The chain runs to 96 residues: UPF0235 protein YE3436 (96 aa).

Belongs to the UPF0235 family.

In Yersinia enterocolitica serotype O:8 / biotype 1B (strain NCTC 13174 / 8081), this protein is UPF0235 protein YE3436.